The sequence spans 329 residues: Cathepsin K (329 aa).

The N-terminal stretch at 1-15 (MWGLKVLLLPVMSFA) is a signal peptide. A propeptide spans 16-114 (LYPEEILDTH…TLYIPDWEGR (99 aa)) (activation peptide). Asn103 is a glycosylation site (N-linked (GlcNAc...) asparagine). Cystine bridges form between Cys136–Cys177, Cys170–Cys210, and Cys269–Cys318. Cys139 is an active-site residue. Active-site residues include His276 and Asn296.

This sequence belongs to the peptidase C1 family.

It is found in the lysosome. The protein localises to the secreted. Its subcellular location is the apical cell membrane. The catalysed reaction is Broad proteolytic activity. With small-molecule substrates and inhibitors, the major determinant of specificity is P2, which is preferably Leu, Met &gt; Phe, and not Arg.. In terms of biological role, thiol protease involved in osteoclastic bone resorption and may participate partially in the disorder of bone remodeling. Displays potent endoprotease activity against fibrinogen at acid pH. May play an important role in extracellular matrix degradation. Involved in the release of thyroid hormone thyroxine (T4) by limited proteolysis of TG/thyroglobulin in the thyroid follicle lumen. The protein is Cathepsin K (CTSK) of Macaca fascicularis (Crab-eating macaque).